Reading from the N-terminus, the 398-residue chain is MAVFKLIKPAPLTEKVQSRQGNIYLYRAMWLIGWIPPKEGVLRYVYLFWTCVPFAFGVFYLPVGFIISYVQEFKNFTPGEFLTSLQVCINVYGASVKSTITYLFLWRLRKTEILLDSLDKRLANDSDRERIHNMVARCNYAFLIYSFIYCGYAGSTFLSYALSGRPPWSVYNPFIDWRDGMGSLWIQAIFEYITMSFAVLQDQLSDTYPLMFTIMFRAHMEVLKDHVRSLRMDPERSEADNYQDLVNCVLDHKTILKCCDMIRPMISRTIFVQFALIGSVLGLTLVNVFFFSNFWKGVASLLFVITILLQTFPFCYTCNMLIDDAQDLSNEIFQSNWVDAEPRYKATLVLFMHHVQQPIIFIAGGIFPISMNSNITVAKFAFSIITIVRQMNLAEQFQ.

The Cytoplasmic segment spans residues 1–46 (MAVFKLIKPAPLTEKVQSRQGNIYLYRAMWLIGWIPPKEGVLRYVY). The helical transmembrane segment at 47 to 67 (LFWTCVPFAFGVFYLPVGFII) threads the bilayer. At 68 to 84 (SYVQEFKNFTPGEFLTS) the chain is on the extracellular side. A helical transmembrane segment spans residues 85 to 105 (LQVCINVYGASVKSTITYLFL). The Cytoplasmic portion of the chain corresponds to 106–141 (WRLRKTEILLDSLDKRLANDSDRERIHNMVARCNYA). The helical transmembrane segment at 142–162 (FLIYSFIYCGYAGSTFLSYAL) threads the bilayer. Topologically, residues 163–179 (SGRPPWSVYNPFIDWRD) are extracellular. The helical transmembrane segment at 180–200 (GMGSLWIQAIFEYITMSFAVL) threads the bilayer. Residues 201 to 269 (QDQLSDTYPL…DMIRPMISRT (69 aa)) are Cytoplasmic-facing. The chain crosses the membrane as a helical span at residues 270 to 290 (IFVQFALIGSVLGLTLVNVFF). Residues 291-293 (FSN) are Extracellular-facing. The helical transmembrane segment at 294-314 (FWKGVASLLFVITILLQTFPF) threads the bilayer. The Cytoplasmic segment spans residues 315–348 (CYTCNMLIDDAQDLSNEIFQSNWVDAEPRYKATL). The chain crosses the membrane as a helical span at residues 349 to 369 (VLFMHHVQQPIIFIAGGIFPI). At 370–398 (SMNSNITVAKFAFSIITIVRQMNLAEQFQ) the chain is on the extracellular side. N-linked (GlcNAc...) asparagine glycosylation is present at asparagine 374.

This sequence belongs to the insect chemoreceptor superfamily. Heteromeric odorant receptor channel (TC 1.A.69) family. Or2a subfamily. Interacts with Orco. Complexes exist early in the endomembrane system in olfactory sensory neurons (OSNs), coupling these complexes to the conserved ciliary trafficking pathway. As to expression, expressed in olfactory sensory neurons in the antenna.

It is found in the cell membrane. Its function is as follows. Odorant receptor which mediates acceptance or avoidance behavior, depending on its substrates. The odorant receptor repertoire encodes a large collection of odor stimuli that vary widely in identity, intensity, and duration. Forms a complex with Orco to form odorant-sensing units, providing sensitive and prolonged odorant signaling and calcium permeability. Also plays a role in the response to N,N-Diethyl-meta-toluamide (DEET), the most widely used insect repellent worldwide. The chain is Odorant receptor 59b (Or59b) from Drosophila melanogaster (Fruit fly).